Reading from the N-terminus, the 341-residue chain is Flagellar P-ring protein (341 aa).

A signal peptide spans methionine 1–alanine 19.

The protein belongs to the FlgI family. The basal body constitutes a major portion of the flagellar organelle and consists of four rings (L,P,S, and M) mounted on a central rod.

Its subcellular location is the periplasm. The protein resides in the bacterial flagellum basal body. Assembles around the rod to form the L-ring and probably protects the motor/basal body from shearing forces during rotation. In Helicobacter acinonychis (strain Sheeba), this protein is Flagellar P-ring protein.